A 291-amino-acid polypeptide reads, in one-letter code: m-AAA protease-interacting protein 1, mitochondrial (291 aa).

The transit peptide at 1-96 directs the protein to the mitochondrion; sequence MALAARLLPQ…SFPACPQRSY (96 aa).

In terms of assembly, interacts with AFG3L2. Interacts with SPG7. Interacts with SMDT1/EMRE (via the N-terminal transit peptide); interaction is direct and takes place before maturation of SMDT1/EMRE.

The protein localises to the mitochondrion matrix. Its function is as follows. Promotes sorting of SMDT1/EMRE in mitochondria by ensuring its maturation. Interacts with the transit peptide region of SMDT1/EMRE precursor protein in the mitochondrial matrix, leading to protect it against protein degradation by YME1L1, thereby ensuring SMDT1/EMRE maturation by the mitochondrial processing peptidase (PMPCA and PMPCB). The chain is m-AAA protease-interacting protein 1, mitochondrial from Homo sapiens (Human).